The sequence spans 745 residues: Bacteriophage N4 adsorption protein B (745 aa).

3 helical membrane-spanning segments follow: residues 8 to 28 (FATWLYGLKVIAITLAVIMFI), 362 to 382 (ISNFVSFLAMLVMIQLLLLLA), and 393 to 413 (FLSIFSGSAWLMTLLWLNFGL).

The protein localises to the cell inner membrane. Required for bacteriophage N4 adsorption. May be a component of the phage receptor. This is Bacteriophage N4 adsorption protein B (nfrB) from Escherichia coli O157:H7.